The following is a 682-amino-acid chain: Potassium-transporting ATPase ATP-binding subunit (682 aa).

A run of 4 helical transmembrane segments spans residues 34–54 (PVMFIVWIGSLLTTFISIAMA), 62–82 (ALFSAAISAWLWVTVLFANFA), 219–239 (IALTILLIALTIVFLLATATL), and 254–274 (VLVALLVCLIPTTIGGLLSAI). The active-site 4-aspartylphosphate intermediate is the aspartate 307. Residues aspartate 344, glutamate 348, 377–384 (FTAQSRMS), and lysine 395 contribute to the ATP site. Mg(2+) is bound by residues aspartate 518 and aspartate 522. 3 consecutive transmembrane segments (helical) span residues 588-608 (FAIIPAAFAATYPQLNALNIM), 616-636 (AILSAVIFNALIIVFLIPLAL), and 656-676 (IYGLGGLLVPFIGIKVIDLLL).

It belongs to the cation transport ATPase (P-type) (TC 3.A.3) family. Type IA subfamily. In terms of assembly, the system is composed of three essential subunits: KdpA, KdpB and KdpC.

The protein resides in the cell inner membrane. The enzyme catalyses K(+)(out) + ATP + H2O = K(+)(in) + ADP + phosphate + H(+). Functionally, part of the high-affinity ATP-driven potassium transport (or Kdp) system, which catalyzes the hydrolysis of ATP coupled with the electrogenic transport of potassium into the cytoplasm. This subunit is responsible for energy coupling to the transport system and for the release of the potassium ions to the cytoplasm. In Escherichia coli (strain SMS-3-5 / SECEC), this protein is Potassium-transporting ATPase ATP-binding subunit.